The following is a 341-amino-acid chain: UDP-3-O-acylglucosamine N-acyltransferase (341 aa).

His242 serves as the catalytic Proton acceptor.

It belongs to the transferase hexapeptide repeat family. LpxD subfamily. Homotrimer.

The enzyme catalyses a UDP-3-O-[(3R)-3-hydroxyacyl]-alpha-D-glucosamine + a (3R)-hydroxyacyl-[ACP] = a UDP-2-N,3-O-bis[(3R)-3-hydroxyacyl]-alpha-D-glucosamine + holo-[ACP] + H(+). The protein operates within bacterial outer membrane biogenesis; LPS lipid A biosynthesis. Functionally, catalyzes the N-acylation of UDP-3-O-acylglucosamine using 3-hydroxyacyl-ACP as the acyl donor. Is involved in the biosynthesis of lipid A, a phosphorylated glycolipid that anchors the lipopolysaccharide to the outer membrane of the cell. The polypeptide is UDP-3-O-acylglucosamine N-acyltransferase (Haemophilus influenzae (strain ATCC 51907 / DSM 11121 / KW20 / Rd)).